The sequence spans 24 residues: MSWTKPAYTDLRIGFEVTMYFASR.

A cross-link (pyrroloquinoline quinone (Glu-Tyr)) is located at residues 16–20 (EVTMY).

This sequence belongs to the PqqA family.

Its pathway is cofactor biosynthesis; pyrroloquinoline quinone biosynthesis. Required for coenzyme pyrroloquinoline quinone (PQQ) biosynthesis. PQQ is probably formed by cross-linking a specific glutamate to a specific tyrosine residue and excising these residues from the peptide. This chain is Coenzyme PQQ synthesis protein A, found in Pseudomonas syringae pv. syringae (strain B728a).